Here is a 372-residue protein sequence, read N- to C-terminus: DNA primase small subunit PriS (372 aa).

Catalysis depends on residues Asp-95, Asp-97, and Asp-280.

Belongs to the eukaryotic-type primase small subunit family. As to quaternary structure, heterodimer of a small subunit (PriS) and a large subunit (PriL). Mg(2+) serves as cofactor. Mn(2+) is required as a cofactor.

Its function is as follows. Catalytic subunit of DNA primase, an RNA polymerase that catalyzes the synthesis of short RNA molecules used as primers for DNA polymerase during DNA replication. The small subunit contains the primase catalytic core and has DNA synthesis activity on its own. Binding to the large subunit stabilizes and modulates the activity, increasing the rate of DNA synthesis while decreasing the length of the DNA fragments, and conferring RNA synthesis capability. The DNA polymerase activity may enable DNA primase to also catalyze primer extension after primer synthesis. May also play a role in DNA repair. The polypeptide is DNA primase small subunit PriS (Cenarchaeum symbiosum (strain A)).